The primary structure comprises 341 residues: tRNA N6-adenosine threonylcarbamoyltransferase (341 aa).

Residues His113 and His117 each coordinate Fe cation. Substrate-binding positions include 141-145 (LVSGG), Asp174, Gly187, and Asn282. Asp310 is a Fe cation binding site.

It belongs to the KAE1 / TsaD family. It depends on Fe(2+) as a cofactor.

It is found in the cytoplasm. It catalyses the reaction L-threonylcarbamoyladenylate + adenosine(37) in tRNA = N(6)-L-threonylcarbamoyladenosine(37) in tRNA + AMP + H(+). Functionally, required for the formation of a threonylcarbamoyl group on adenosine at position 37 (t(6)A37) in tRNAs that read codons beginning with adenine. Is involved in the transfer of the threonylcarbamoyl moiety of threonylcarbamoyl-AMP (TC-AMP) to the N6 group of A37, together with TsaE and TsaB. TsaD likely plays a direct catalytic role in this reaction. The protein is tRNA N6-adenosine threonylcarbamoyltransferase of Porphyromonas gingivalis (strain ATCC BAA-308 / W83).